Here is a 102-residue protein sequence, read N- to C-terminus: Vacuolar ATPase assembly integral membrane protein VMA21 (102 aa).

Residues 1–30 (MERYDKATLNAAFAPEFRQNEGSLTSTLRT) are Cytoplasmic-facing. Residues 31 to 51 (LLFFTALMITLPVGLYFSSKA) traverse the membrane as a helical segment. At 52-66 (YIFEGTLGMSNRDSY) the chain is on the lumenal side. A helical membrane pass occupies residues 67 to 87 (FYAAIVAVVTVHVVLAMFVYV). The Cytoplasmic portion of the chain corresponds to 88 to 102 (AWSEGTRQWREGKQD).

This sequence belongs to the VMA21 family. As to quaternary structure, associates with the V0 complex of the vacuolar ATPase (V-ATPase). Interacts with ATP6AP2.

It is found in the endoplasmic reticulum membrane. It localises to the endoplasmic reticulum-Golgi intermediate compartment membrane. The protein resides in the cytoplasmic vesicle. Its subcellular location is the COPII-coated vesicle membrane. Its function is as follows. Required for the assembly of the V0 complex of the vacuolar ATPase (V-ATPase) in the endoplasmic reticulum. The polypeptide is Vacuolar ATPase assembly integral membrane protein VMA21 (Gallus gallus (Chicken)).